The following is a 298-amino-acid chain: Tyrosine recombinase XerD (298 aa).

Positions 2–87 constitute a Core-binding (CB) domain; the sequence is KQELARIEQF…AVRRLFQYLY (86 aa). The Tyr recombinase domain maps to 108-292; the sequence is RLPKDLSEAQ…ATERLRQLHQ (185 aa). Residues Arg-148, Lys-172, His-244, Arg-247, and His-270 contribute to the active site. Tyr-279 acts as the O-(3'-phospho-DNA)-tyrosine intermediate in catalysis.

It belongs to the 'phage' integrase family. XerD subfamily. As to quaternary structure, forms a cyclic heterotetrameric complex composed of two molecules of XerC and two molecules of XerD, in which XerC interacts with XerD via its C-terminal region, XerD interacts with XerC via its C-terminal region and so on.

It is found in the cytoplasm. Its activity is regulated as follows. FtsK may regulate the catalytic switch between XerC and XerD in the heterotetrameric complex during the two steps of the recombination process. Site-specific tyrosine recombinase, which acts by catalyzing the cutting and rejoining of the recombining DNA molecules. Binds cooperatively to specific DNA consensus sequences that are separated from XerC binding sites by a short central region, forming the heterotetrameric XerC-XerD complex that recombines DNA substrates. The complex is essential to convert dimers of the bacterial chromosome into monomers to permit their segregation at cell division. It also contributes to the segregational stability of plasmids. In the complex XerD specifically exchanges the bottom DNA strands. This chain is Tyrosine recombinase XerD, found in Shigella flexneri.